Here is a 434-residue protein sequence, read N- to C-terminus: Adenylosuccinate synthetase (434 aa).

Residues 22-28 (GDEGKGK) and 50-52 (GHT) contribute to the GTP site. Residue Asp23 is the Proton acceptor of the active site. 2 residues coordinate Mg(2+): Asp23 and Gly50. Residues 23–26 (DEGK), 48–51 (NAGH), Thr139, Arg153, Gln234, Thr249, and Arg313 each bind IMP. The active-site Proton donor is the His51. 309–315 (ATTGRKR) provides a ligand contact to substrate. GTP contacts are provided by residues Arg315, 341–343 (KLD), and 423–425 (SVG).

It belongs to the adenylosuccinate synthetase family. Homodimer. Requires Mg(2+) as cofactor.

It is found in the cytoplasm. The catalysed reaction is IMP + L-aspartate + GTP = N(6)-(1,2-dicarboxyethyl)-AMP + GDP + phosphate + 2 H(+). The protein operates within purine metabolism; AMP biosynthesis via de novo pathway; AMP from IMP: step 1/2. Plays an important role in the de novo pathway of purine nucleotide biosynthesis. Catalyzes the first committed step in the biosynthesis of AMP from IMP. The chain is Adenylosuccinate synthetase from Chlorobium chlorochromatii (strain CaD3).